The chain runs to 195 residues: Ribonuclease HII (195 aa).

In terms of domain architecture, RNase H type-2 spans 1-195 (MICGIDEAGR…SWRTLRYLNT (195 aa)). 3 residues coordinate a divalent metal cation: Asp6, Glu7, and Asp101.

Belongs to the RNase HII family. The cofactor is Mn(2+). Requires Mg(2+) as cofactor.

The protein resides in the cytoplasm. The catalysed reaction is Endonucleolytic cleavage to 5'-phosphomonoester.. Endonuclease that specifically degrades the RNA of RNA-DNA hybrids. The sequence is that of Ribonuclease HII from Pyrobaculum islandicum (strain DSM 4184 / JCM 9189 / GEO3).